A 604-amino-acid polypeptide reads, in one-letter code: Terpenoid synthase 30 (604 aa).

Residues Asn356, Asp360, Asn500, Thr504, and Glu508 each coordinate Mg(2+). Residues 356–360 (NDVCD) carry the DDXXD motif; degenerate motif.

Belongs to the terpene synthase family. Tpsa subfamily. The cofactor is Mg(2+). Mn(2+) serves as cofactor.

The protein localises to the cytoplasm. The protein operates within secondary metabolite biosynthesis; terpenoid biosynthesis. Functionally, involved in terpene biosynthesis in roots. Possesses sesquiterpene (C15) synthase activity and diterpene (C20) synthase activity in vitro. The protein is Terpenoid synthase 30 of Arabidopsis thaliana (Mouse-ear cress).